The chain runs to 438 residues: Thymidine phosphorylase (438 aa).

It belongs to the thymidine/pyrimidine-nucleoside phosphorylase family. Homodimer.

The enzyme catalyses thymidine + phosphate = 2-deoxy-alpha-D-ribose 1-phosphate + thymine. Its pathway is pyrimidine metabolism; dTMP biosynthesis via salvage pathway; dTMP from thymine: step 1/2. Functionally, the enzymes which catalyze the reversible phosphorolysis of pyrimidine nucleosides are involved in the degradation of these compounds and in their utilization as carbon and energy sources, or in the rescue of pyrimidine bases for nucleotide synthesis. The sequence is that of Thymidine phosphorylase from Burkholderia orbicola (strain MC0-3).